A 256-amino-acid chain; its full sequence is Alcohol dehydrogenase (256 aa).

12-41 (FVAGLGGIGLDTTKELLKRDLKNLVILDRI) contributes to the NAD(+) binding site. Ser-140 is a substrate binding site. Residue Tyr-153 is the Proton acceptor of the active site.

Belongs to the short-chain dehydrogenases/reductases (SDR) family. Homodimer.

It catalyses the reaction a primary alcohol + NAD(+) = an aldehyde + NADH + H(+). The enzyme catalyses a secondary alcohol + NAD(+) = a ketone + NADH + H(+). The polypeptide is Alcohol dehydrogenase (Drosophila ananassae (Fruit fly)).